A 340-amino-acid polypeptide reads, in one-letter code: DNA-directed RNA polymerase subunit alpha (340 aa).

Residues 1–233 are alpha N-terminal domain (alpha-NTD); the sequence is MIRDEISVST…DLFIPFLRAE (233 aa). The alpha C-terminal domain (alpha-CTD) stretch occupies residues 268–340; that stretch reads AFKHIFIDQS…DLPKNKFQIH (73 aa).

The protein belongs to the RNA polymerase alpha chain family. In plastids the minimal PEP RNA polymerase catalytic core is composed of four subunits: alpha, beta, beta', and beta''. When a (nuclear-encoded) sigma factor is associated with the core the holoenzyme is formed, which can initiate transcription.

It is found in the plastid. The protein localises to the chloroplast. It carries out the reaction RNA(n) + a ribonucleoside 5'-triphosphate = RNA(n+1) + diphosphate. DNA-dependent RNA polymerase catalyzes the transcription of DNA into RNA using the four ribonucleoside triphosphates as substrates. This chain is DNA-directed RNA polymerase subunit alpha, found in Cycas taitungensis (Prince sago).